The sequence spans 176 residues: Inorganic pyrophosphatase (176 aa).

3 residues coordinate substrate: K30, R44, and Y56. The Mg(2+) site is built by D66, D71, and D103. Residue Y142 participates in substrate binding.

It belongs to the PPase family. Homohexamer. The cofactor is Mg(2+).

Its subcellular location is the cytoplasm. The enzyme catalyses diphosphate + H2O = 2 phosphate + H(+). Its function is as follows. Catalyzes the hydrolysis of inorganic pyrophosphate (PPi) forming two phosphate ions. The polypeptide is Inorganic pyrophosphatase (Aeropyrum pernix (strain ATCC 700893 / DSM 11879 / JCM 9820 / NBRC 100138 / K1)).